The sequence spans 56 residues: Alpha-conotoxin EpI (56 aa).

An N-terminal signal peptide occupies residues 1 to 16 (MFTVFLLVVLATTVVS). A propeptide spanning residues 17–39 (FTSDRASDSRKDAASGLIALTIK) is cleaved from the precursor. Intrachain disulfides connect cysteine 41–cysteine 47 and cysteine 42–cysteine 55. Positions 43–45 (SDP) are ser-Xaa-Pro motif, crucial for potent interaction with nAChR. Tyrosine 54 carries the post-translational modification Sulfotyrosine. Cysteine 55 carries the cysteine amide modification.

This sequence belongs to the conotoxin A superfamily. Post-translationally, both tyrosine sulfation and C-terminal amidation are important for activity and structure stability. In terms of tissue distribution, expressed by the venom duct.

The protein localises to the secreted. In terms of biological role, alpha-conotoxins act on postsynaptic membranes, they bind to the nicotinic acetylcholine receptors (nAChR) and thus inhibit them. This native peptide blocks mammalian nicotinic acetylcholine receptors composed of alpha-3-beta-2/CHRNA3-CHRNB2 and alpha-3-beta-4/CHRNA3-CHRNB4 subunits. The sequence is that of Alpha-conotoxin EpI from Conus episcopatus (Bishop's cone).